A 334-amino-acid chain; its full sequence is NmrA-like family domain-containing oxidoreductase lnaB (334 aa).

NADP(+) contacts are provided by residues 12 to 17 (GGTGKQ), 38 to 42 (RNAQS), 59 to 60 (DG), 80 to 82 (INS), lysine 138, and 162 to 165 (FLEN).

This sequence belongs to the NmrA-type oxidoreductase family.

It participates in secondary metabolite biosynthesis. Its function is as follows. NmrA-like family domain-containing oxidoreductase; part of the lna gene cluster that mediates the biosynthesis of diastereomeric piperazines. Lna and lnb clusters encode sets of enzymes that produce overlapping sets of previously undescribed metabolites such as piperazinomycin-like metabolites or morpholine. The lna and lnb biosynthetic pathways appear to be part of a signaling network that controls the formation of sclerotia, a resilient overwintering structure. One primary function of the non-canonical nonribosomal peptide synthetases lnaA and lnbA consists in the reduction of L-tyrosine. The presence in the clusters of tailoring enzymes such as the oxidoreductases lnaB, lnbB, lnaE or lnbE, as well as of the cytochrome P450 monooxygenases lnaC, lnaD, or lnbC, might explain formation of various diastereomeric piperazines. The polypeptide is NmrA-like family domain-containing oxidoreductase lnaB (Aspergillus flavus (strain ATCC 200026 / FGSC A1120 / IAM 13836 / NRRL 3357 / JCM 12722 / SRRC 167)).